The primary structure comprises 181 residues: Large ribosomal subunit protein uL5 (181 aa).

The protein belongs to the universal ribosomal protein uL5 family. As to quaternary structure, part of the 50S ribosomal subunit; part of the 5S rRNA/L5/L18/L25 subcomplex. Contacts the 5S rRNA and the P site tRNA. Forms a bridge to the 30S subunit in the 70S ribosome.

Functionally, this is one of the proteins that bind and probably mediate the attachment of the 5S RNA into the large ribosomal subunit, where it forms part of the central protuberance. In the 70S ribosome it contacts protein S13 of the 30S subunit (bridge B1b), connecting the 2 subunits; this bridge is implicated in subunit movement. Contacts the P site tRNA; the 5S rRNA and some of its associated proteins might help stabilize positioning of ribosome-bound tRNAs. The protein is Large ribosomal subunit protein uL5 of Helicobacter pylori (strain HPAG1).